The chain runs to 750 residues: Catalase-peroxidase (750 aa).

The tryptophyl-tyrosyl-methioninium (Trp-Tyr) (with M-261) cross-link spans Trp112 to Tyr235. Residue His113 is the Proton acceptor of the active site. The segment at residues Tyr235 to Met261 is a cross-link (tryptophyl-tyrosyl-methioninium (Tyr-Met) (with W-112)). His276 provides a ligand contact to heme b.

This sequence belongs to the peroxidase family. Peroxidase/catalase subfamily. Homodimer or homotetramer. It depends on heme b as a cofactor. Post-translationally, formation of the three residue Trp-Tyr-Met cross-link is important for the catalase, but not the peroxidase activity of the enzyme.

It carries out the reaction H2O2 + AH2 = A + 2 H2O. It catalyses the reaction 2 H2O2 = O2 + 2 H2O. Functionally, bifunctional enzyme with both catalase and broad-spectrum peroxidase activity. The protein is Catalase-peroxidase of Christiangramia forsetii (strain DSM 17595 / CGMCC 1.15422 / KT0803) (Gramella forsetii).